Here is a 599-residue protein sequence, read N- to C-terminus: Ecdysone oxidase (599 aa).

FAD is bound by residues asparagine 137–valine 140 and tryptophan 537–histidine 538. Residue histidine 538 is the Proton acceptor of the active site.

It belongs to the GMC oxidoreductase family. FAD is required as a cofactor.

The enzyme catalyses ecdysone + O2 = 3-dehydroecdysone + H2O2. Its function is as follows. Involved in the inactivation of ecdysteroid molting hormones by converting ecdysteroids into 3-dehydroecdysteroids. In Spodoptera littoralis (Egyptian cotton leafworm), this protein is Ecdysone oxidase.